Reading from the N-terminus, the 395-residue chain is Allantoicase (395 aa).

This sequence belongs to the allantoicase family.

It catalyses the reaction allantoate + H2O = (S)-ureidoglycolate + urea. Its pathway is nitrogen metabolism; (S)-allantoin degradation; (S)-ureidoglycolate from allantoate (aminidohydrolase route): step 1/1. In terms of biological role, utilization of purines as secondary nitrogen sources, when primary sources are limiting. The sequence is that of Allantoicase (allc) from Danio rerio (Zebrafish).